Here is a 398-residue protein sequence, read N- to C-terminus: Isopenicillin N epimerase (398 aa).

N6-(pyridoxal phosphate)lysine is present on Lys217.

The protein belongs to the class-V pyridoxal-phosphate-dependent aminotransferase family. Requires pyridoxal 5'-phosphate as cofactor.

The catalysed reaction is isopenicillin N = penicillin N. It functions in the pathway antibiotic biosynthesis; cephalosporin C biosynthesis. Catalyzes the reversible isomerization between isopenicillin N and penicillin N. The chain is Isopenicillin N epimerase (cefD) from Streptomyces clavuligerus.